Reading from the N-terminus, the 268-residue chain is Tetratricopeptide repeat protein 33 (268 aa).

A disordered region spans residues 14–34 (VSKQTVQQFEQDSEQADEDEV). Residues 24–34 (QDSEQADEDEV) show a composition bias toward acidic residues. TPR repeat units follow at residues 60–93 (SKRL…TPED), 94–127 (AVLY…RPIW), and 128–161 (WEAW…HPSE). The tract at residues 249-268 (EGDDNPTSSSQSVLIKARGL) is disordered.

The sequence is that of Tetratricopeptide repeat protein 33 (ttc33) from Danio rerio (Zebrafish).